We begin with the raw amino-acid sequence, 540 residues long: Chaperonin GroEL 3 (540 aa).

Residues 30 to 33 (TLGP), Lys51, 87 to 91 (DGTTT), Gly415, 479 to 481 (NAA), and Asp495 contribute to the ATP site.

The protein belongs to the chaperonin (HSP60) family. Forms a cylinder of 14 subunits composed of two heptameric rings stacked back-to-back. Interacts with the co-chaperonin GroES.

It localises to the cytoplasm. It carries out the reaction ATP + H2O + a folded polypeptide = ADP + phosphate + an unfolded polypeptide.. Its function is as follows. Together with its co-chaperonin GroES, plays an essential role in assisting protein folding. The GroEL-GroES system forms a nano-cage that allows encapsulation of the non-native substrate proteins and provides a physical environment optimized to promote and accelerate protein folding. The sequence is that of Chaperonin GroEL 3 from Burkholderia cenocepacia (strain HI2424).